The chain runs to 439 residues: Cysteine desulfurase-like protein ustD (439 aa).

The tract at residues 1 to 25 is disordered; that stretch reads MKSVATSSLDDVDKDSVPLGSSING. Pyridoxal 5'-phosphate contacts are provided by residues 120–121, Asn206, and 255–257; these read TT and SWY. Lys258 bears the N6-(pyridoxal phosphate)lysine mark.

This sequence belongs to the class-V pyridoxal-phosphate-dependent aminotransferase family. Pyridoxal 5'-phosphate is required as a cofactor.

It participates in mycotoxin biosynthesis. Functionally, cysteine desulfurase-like protein; part of the gene cluster that mediates the biosynthesis of the secondary metabolite ustiloxin B, an antimitotic tetrapeptide. First, ustA is processed by the subtilisin-like endoprotease Kex2 that is outside the ustiloxin B gene cluster, at the C-terminal side of Arg-Lys, after transfer to Golgi apparatus through the endoplasmic reticulum (ER). Cleavage by KEX2 generates 16 peptides YAIG-I to YAIG-XVI. To process the precursor peptide further, at least two peptidases are necessary to cleave the N-terminal and C-terminal sides of the Tyr-Ala-Ile-Gly core peptide which serves as backbone for the synthesis of ustiloxin B, through cyclization and modification of the tyrosine with a non-protein coding amino acid, norvaline. One of the two peptidases must be the serine peptidase ustP; and the other pepdidase is probably ustH. Macrocyclization of the core peptide derived from ustA requires the tyrosinase ustQ, as well as the homologous oxidases ustYa and ustYb, and leads to the production of the first cyclization product N-desmethylustiloxin F. For the formation of N-desmethylustiloxin F, three oxidation steps are required, hydroxylation at the benzylic position, hydroxylation at either the aromatic ring of Tyr or beta-position of Ile, and oxidative cyclization. UstQ may catalyze the oxidation of a phenol moiety, whereas the ustYa and ustYb are most likely responsible for the remaining two-step oxidations. N-desmethylustiloxin F is then methylated by ustM to yield ustiloxin F which in turn substrate of the cytochrome P450 monooxygenase ustC which catalyzes the formation of S-deoxyustiloxin H. The flavoprotein monooxygenases ustF1 and ustF2 then participate in the modification of the side chain of S-deoxyustiloxin H, leading to the synthesis of an oxime intermediate, via ustiloxin H. Finally, carboxylative dehydration performed by the cysteine desulfurase-like protein ustD yields ustiloxin B. The polypeptide is Cysteine desulfurase-like protein ustD (Aspergillus flavus (strain ATCC 200026 / FGSC A1120 / IAM 13836 / NRRL 3357 / JCM 12722 / SRRC 167)).